We begin with the raw amino-acid sequence, 252 residues long: 2-succinyl-6-hydroxy-2,4-cyclohexadiene-1-carboxylate synthase (252 aa).

Belongs to the AB hydrolase superfamily. MenH family. In terms of assembly, monomer.

It carries out the reaction 5-enolpyruvoyl-6-hydroxy-2-succinyl-cyclohex-3-ene-1-carboxylate = (1R,6R)-6-hydroxy-2-succinyl-cyclohexa-2,4-diene-1-carboxylate + pyruvate. It functions in the pathway quinol/quinone metabolism; 1,4-dihydroxy-2-naphthoate biosynthesis; 1,4-dihydroxy-2-naphthoate from chorismate: step 3/7. Its pathway is quinol/quinone metabolism; menaquinone biosynthesis. Its function is as follows. Catalyzes a proton abstraction reaction that results in 2,5-elimination of pyruvate from 2-succinyl-5-enolpyruvyl-6-hydroxy-3-cyclohexene-1-carboxylate (SEPHCHC) and the formation of 2-succinyl-6-hydroxy-2,4-cyclohexadiene-1-carboxylate (SHCHC). The sequence is that of 2-succinyl-6-hydroxy-2,4-cyclohexadiene-1-carboxylate synthase from Salmonella newport (strain SL254).